The primary structure comprises 97 residues: Serine protease inhibitor Kazal-type 13 (97 aa).

Residues 1-26 (MKRSGCWHQRMLLSLVLLTWTHVTFS) form the signal peptide. Asparagine 33 carries N-linked (GlcNAc...) asparagine glycosylation. One can recognise a Kazal-like domain in the interval 36–97 (RWPKPPCKMY…IQFVKYGKCE (62 aa)). Cystine bridges form between cysteine 42/cysteine 78, cysteine 56/cysteine 75, and cysteine 64/cysteine 96.

The protein localises to the secreted. May be a serine protease inhibitor. Essential for sperm maturation and fertility. Inhibits sperm acrosome reaction, protecting sperm from premature reaction. The chain is Serine protease inhibitor Kazal-type 13 (Spink13) from Mus musculus (Mouse).